The chain runs to 138 residues: Phosphoribosyl-AMP cyclohydrolase (138 aa).

Asp92 contacts Mg(2+). Cys93 provides a ligand contact to Zn(2+). Mg(2+) is bound by residues Asp94 and Asp96. Residues Cys109 and Cys116 each contribute to the Zn(2+) site.

Belongs to the PRA-CH family. In terms of assembly, homodimer. The cofactor is Mg(2+). Zn(2+) is required as a cofactor.

The protein resides in the cytoplasm. It catalyses the reaction 1-(5-phospho-beta-D-ribosyl)-5'-AMP + H2O = 1-(5-phospho-beta-D-ribosyl)-5-[(5-phospho-beta-D-ribosylamino)methylideneamino]imidazole-4-carboxamide. The protein operates within amino-acid biosynthesis; L-histidine biosynthesis; L-histidine from 5-phospho-alpha-D-ribose 1-diphosphate: step 3/9. Catalyzes the hydrolysis of the adenine ring of phosphoribosyl-AMP. This Clavibacter sepedonicus (Clavibacter michiganensis subsp. sepedonicus) protein is Phosphoribosyl-AMP cyclohydrolase.